We begin with the raw amino-acid sequence, 320 residues long: Transmembrane protein 41 homolog (320 aa).

Residues 20-72 (GRAKALQEHSPDQVATPLLPQVPPQEQQDLNPQQQQQQQQQQQATPQKQAMSA) form a disordered region. Positions 43 to 68 (PQEQQDLNPQQQQQQQQQQQATPQKQ) are enriched in low complexity. Transmembrane regions (helical) follow at residues 83 to 103 (VIVA…YAIF), 141 to 161 (VMFG…PGSL), 173 to 195 (FPIA…YTLS), 225 to 242 (LFNY…PNWF), 245 to 265 (LASP…FCGV), and 289 to 309 (FSWT…LPGL).

The protein belongs to the TMEM41 family. In embryos, strongly expressed in the nervous system.

Its subcellular location is the membrane. Required in cholinergic neurons, but not in motor neurons, for normal neurotransmitter release by motor neurons. Involved in muscle growth. The chain is Transmembrane protein 41 homolog (stas) from Drosophila melanogaster (Fruit fly).